The chain runs to 90 residues: UPF0297 protein Cthe_0151 (90 aa).

It belongs to the UPF0297 family.

The sequence is that of UPF0297 protein Cthe_0151 from Acetivibrio thermocellus (strain ATCC 27405 / DSM 1237 / JCM 9322 / NBRC 103400 / NCIMB 10682 / NRRL B-4536 / VPI 7372) (Clostridium thermocellum).